The following is a 268-amino-acid chain: UPF0739 protein C1orf74 homolog (268 aa).

This sequence belongs to the UPF0739 family.

The chain is UPF0739 protein C1orf74 homolog from Salmo salar (Atlantic salmon).